A 310-amino-acid polypeptide reads, in one-letter code: MERDFLGLGSKLSPITVKEETNEDSAPSRGMMDWSFSSKVGSGPQFLSFGTSQQETRVNTVNDHLLSSAAMDQNQRTYFSSLQEDRVFPGSSQQDQTTITVSMSEPNYINSFINHQHLGGSPIMAPPVSVFPAPTTIRSSSKPLPPQLTIFYAGSVLVYQDIAPEKAQAIMLLAGNGPHAKPVSQPKPQKLVHHSLPTTDPPTMPPSFLPSISYIVSETRSSGSNGVTGLGPTKTKASLASTRNNQTAAFSMAPTVGLPQTRKASLARFLEKRKERVINVSPYYVDNKSSIDCRTLMSECVSCPPAHHLH.

A Tify domain is found at 141-176 (SKPLPPQLTIFYAGSVLVYQDIAPEKAQAIMLLAGN). The Jas motif lies at 259 to 284 (PQTRKASLARFLEKRKERVINVSPYY). A Nuclear localization signal motif is present at residues 261 to 268 (TRKASLAR).

Belongs to the TIFY/JAZ family. Homo- and heterodimer. Interacts with MYC2, AFPH2/NINJA, TIFY10A/JAZ1, TIFY6B/JAZ3, TIFY5A/JAZ8, TIFY9/JAZ10 and TIFY3A/JAZ11. Interacts with RHD6 and RSL1. Post-translationally, ubiquitinated. Targeted for degradation by the SCF(COI1) E3 ubiquitin ligase-proteasome pathway during jasmonate signaling.

The protein resides in the nucleus. Its function is as follows. Repressor of jasmonate responses. Interacts with and suppresses RHD6 and RSL1 transcription factor activities to negatively regulate jasmonate-stimulated root hair development. The chain is Protein TIFY 6A (TIFY6A) from Arabidopsis thaliana (Mouse-ear cress).